We begin with the raw amino-acid sequence, 158 residues long: Rhombotin-2 (158 aa).

2 LIM zinc-binding domains span residues 30–89 (CGGC…RLFG) and 94–153 (CASC…EWTK).

As to quaternary structure, interacts via its LIM domains with ELF2 and LDB1. Interacts with BEX2 and KDM5A. Also interacts with basic helix-loop-helix protein TAL1/SCL and can assemble in a complex with LMO2 and TAL1/SCL.

The protein localises to the nucleus. Its function is as follows. Acts with TAL1/SCL to regulate red blood cell development. Also acts with LDB1 to maintain erythroid precursors in an immature state. This is Rhombotin-2 (LMO2) from Bos taurus (Bovine).